We begin with the raw amino-acid sequence, 336 residues long: Glycerol-3-phosphate dehydrogenase [NAD(P)+] (336 aa).

NADPH-binding residues include Ser11, Trp12, and Lys106. Sn-glycerol 3-phosphate-binding residues include Lys106, Gly134, and Ser136. Ala138 is a binding site for NADPH. Sn-glycerol 3-phosphate-binding residues include Lys189, Asp242, Ser252, Arg253, and Asn254. The active-site Proton acceptor is Lys189. Residue Arg253 participates in NADPH binding. The NADPH site is built by Val277 and Glu279.

Belongs to the NAD-dependent glycerol-3-phosphate dehydrogenase family.

It localises to the cytoplasm. It catalyses the reaction sn-glycerol 3-phosphate + NAD(+) = dihydroxyacetone phosphate + NADH + H(+). It carries out the reaction sn-glycerol 3-phosphate + NADP(+) = dihydroxyacetone phosphate + NADPH + H(+). The protein operates within membrane lipid metabolism; glycerophospholipid metabolism. In terms of biological role, catalyzes the reduction of the glycolytic intermediate dihydroxyacetone phosphate (DHAP) to sn-glycerol 3-phosphate (G3P), the key precursor for phospholipid synthesis. This is Glycerol-3-phosphate dehydrogenase [NAD(P)+] from Agathobacter rectalis (strain ATCC 33656 / DSM 3377 / JCM 17463 / KCTC 5835 / VPI 0990) (Eubacterium rectale).